The primary structure comprises 911 residues: Probable dipeptidyl-aminopeptidase B (911 aa).

Positions 1–39 (MPRPRAAKEEETELLAQHQESPRPSSDGSEASASSISTT) are disordered. At 1–97 (MPRPRAAKEE…TPVDKKARRT (97 aa)) the chain is on the cytoplasmic side. A compositionally biased stretch (low complexity) spans 25–39 (SSDGSEASASSISTT). Residues 98–118 (LWIVGTICAVGWALALVSFLM) traverse the membrane as a helical; Signal-anchor for type II membrane protein segment. Topologically, residues 119–911 (NGNYKHSSTR…AQADARSLGR (793 aa)) are vacuolar. N-linked (GlcNAc...) asparagine glycosylation is found at Asn268 and Asn564. The Charge relay system role is filled by Ser755. Asn809 carries an N-linked (GlcNAc...) asparagine glycan. Catalysis depends on charge relay system residues Asp832 and His865.

Belongs to the peptidase S9B family.

The protein localises to the vacuole membrane. It carries out the reaction Release of an N-terminal dipeptide, Xaa-Yaa-|-Zaa-, from a polypeptide, preferentially when Yaa is Pro, provided Zaa is neither Pro nor hydroxyproline.. Its function is as follows. Type IV dipeptidyl-peptidase which removes N-terminal dipeptides sequentially from polypeptides having unsubstituted N-termini provided that the penultimate residue is proline. In Phaeosphaeria nodorum (strain SN15 / ATCC MYA-4574 / FGSC 10173) (Glume blotch fungus), this protein is Probable dipeptidyl-aminopeptidase B (DAPB).